Consider the following 782-residue polypeptide: MSGVQSKAARLQKERKEKLSADRERKTATSLCLKHSEVPASMMKQFNALMEMQEVMFAEMRETYKNDIKEMLLKRTAPWVKHLEERIGQQEGDAISERPKPGEKVEELSSGTDEDTENLTVRSKKGKQDKAKPLNSSHVLKSSLERGGEALRGEHGRCGESSSLVDWKNANEKPAREASCQSEENRLKAPKESPPEGGAGATLRLAADFSAATLDVGRQWSQVFRLLKEKELEPELQCSVKLAFKCDGEANVFSDLHSLRQFTSRKPFLRELLKDVFPQNEGGRRNELRERLGKTLGDTKHEARRIASDSLSFLFIKEVEVASPEVKTYKEETLDRKNKGTLKKQEGEEEEISETQGEETSEGETSELGEEEGSESEEEEESSESEEEEESSESAEEIGFISLVVDSESEEEVNRKTASQTKKKETFHGLKELAFSYLVWDSKKKKLVRCQEGGAAAASTQRIGMPCLTLYLTSPSESLGAGSDGPKSHSCTKLSALSQVTPLLTNIEKGRYKVPQTEEPTAKEADLILETEENFKRGVISVIRQMQREVDKIKNIYVSDVLNMKSSLDDLNSLACTIEARVSEQEDAVEGLTKDTMQLAREIVDKERLREREDRFRSSNIRVIGIPEKENRENGAVDIIKEVIEENFAELEDQSLEIVSAHRVPNSVDEHRLTPRHILVKFGSASDKQRVLKASRAKQEITYRGSKIRLTADLSPGTIDARSQWCGIIKILQDEGFQPRILYPAKLAFDFKGKTKIFFDIEEFKKFISDIPYLKDLLNNIH.

3 disordered regions span residues 1 to 30 (MSGVQSKAARLQKERKEKLSADRERKTATS), 90 to 200 (QEGD…GGAG), and 338 to 397 (NKGT…SAEE). Basic and acidic residues-rich tracts occupy residues 11-27 (LQKERKEKLSADRERKT) and 95-107 (ISERPKPGEKVEE). Ser-136 bears the Phosphoserine mark. 2 stretches are compositionally biased toward basic and acidic residues: residues 143 to 158 (SLERGGEALRGEHGRC) and 183 to 194 (EENRLKAPKESP). Over residues 347–396 (GEEEEISETQGEETSEGETSELGEEEGSESEEEEESSESEEEEESSESAE) the composition is skewed to acidic residues. 7 positions are modified to phosphoserine: Ser-407, Ser-409, Ser-442, Ser-478, Ser-490, Ser-559, and Ser-567.

It belongs to the transposase 22 family.

The sequence is that of LINE-1 type transposase domain-containing protein 1 (L1td1) from Mus musculus (Mouse).